Here is a 284-residue protein sequence, read N- to C-terminus: MTPSTPPRSRGTRYLAQPSGNTSSSALMQGQKTPQKPSQNLVPVTPSTTKSFKNAPLLAPPNSNMGMTSPFNGLTSPQRSPFPKSSVKRTLFQFESHDNGTVREEQEPLGRVNRILFPTQQNVDIDAAEEEEEGEVLLPPSRPTSARQLHLSLERDEFDQTHRKKIIKDVPGTPSDKVITFELAKNWNNNSPKNDARSQESEDEEDIIINPVRVGKNPFASDELVTQEIRNERKRAMLRENPDIEDVITYVNKKGEVVEKRRLTDEEKRRFKPKALFQSRDQEH.

A disordered region spans residues 1–89; sequence MTPSTPPRSR…SPFPKSSVKR (89 aa). Thr5 carries the post-translational modification Phosphothreonine; by PHO85. Polar residues-rich tracts occupy residues 18–52 and 61–79; these read PSGN…TKSF and PNSN…SPQR. A Phosphothreonine modification is found at Thr33. At Ser76 the chain carries Phosphoserine. Residue Thr173 is modified to Phosphothreonine. Ser198 and Ser201 each carry phosphoserine. Lysine derivative occurs at positions 268, 272, and 274.

As to quaternary structure, interacts with HOG1. Post-translationally, phosphorylated by cyclin-dependent kinases CDC28 and PHO85 in association with G1-cyclins, promoting degradation of SIC1 and exit form G1. May contain a covalently attached chromophore. In terms of processing, the N-terminus is blocked.

It localises to the cytoplasm. Its subcellular location is the nucleus. Substrate and inhibitor of the cyclin-dependent protein kinase CDC28. Its activity could be important for faithful segregation of chromosomes to daughter cells. It acts in response to a signal from a post-start checkpoint. This chain is Protein SIC1 (SIC1), found in Saccharomyces cerevisiae (strain ATCC 204508 / S288c) (Baker's yeast).